The sequence spans 260 residues: HTH-type transcriptional activator FapR (260 aa).

In terms of domain architecture, HTH araC/xylS-type spans 154-251; that stretch reads ERIVTLLFSD…GVTPKKFEIG (98 aa). DNA-binding regions (H-T-H motif) lie at residues 171-192 and 218-241; these read SDIAEEMHISEISVRKRLEQEC and IGMIASLVGYTSVSYFIKTFKEYY.

In terms of assembly, homodimer.

Its function is as follows. Positive regulator of the expression of the 987P operon for the fimbrial protein in enterotoxigenic E.coli. The chain is HTH-type transcriptional activator FapR from Escherichia coli.